Here is a 252-residue protein sequence, read N- to C-terminus: Major prion protein (252 aa).

An N-terminal signal peptide occupies residues 1–28 (MAHLGYWMLLLFVATWSDVGLCKKRPKP). Positions 23–229 (KKRPKPGGGW…ESQAAYQRAA (207 aa)) are interaction with GRB2, ERI3 and SYN1. Residues 26–109 (PKPGGGWNTG…KPSKPKTSMK (84 aa)) are disordered. 5 consecutive repeat copies span residues 51–59 (PPQGGGWGQ), 60–67 (PHGGGWGQ), 68–75 (PHGGGWGQ), 76–83 (PHGGGWGQ), and 84–92 (PHGGGWGQG). The 5 X 8 AA tandem repeats of P-H-G-G-G-W-G-Q stretch occupies residues 51-92 (PPQGGGWGQPHGGGWGQPHGGGWGQPHGGGWGQPHGGGWGQG). Over residues 53–93 (QGGGWGQPHGGGWGQPHGGGWGQPHGGGWGQPHGGGWGQGG) the composition is skewed to gly residues. The Cu(2+) site is built by H61, G62, G63, H69, G70, G71, H77, G78, G79, H85, G86, and G87. C178 and C213 form a disulfide bridge. Residues N180 and N196 are each glycosylated (N-linked (GlcNAc...) asparagine). A229 is lipidated: GPI-anchor amidated alanine. Positions 230-252 (GVLLFSSPPVILLISFLIFLIVG) are cleaved as a propeptide — removed in mature form.

It belongs to the prion family. As to quaternary structure, monomer and homodimer. Has a tendency to aggregate into amyloid fibrils containing a cross-beta spine, formed by a steric zipper of superposed beta-strands. Soluble oligomers may represent an intermediate stage on the path to fibril formation. Copper binding may promote oligomerization. Interacts with GRB2, APP, ERI3/PRNPIP and SYN1. Mislocalized cytosolically exposed PrP interacts with MGRN1; this interaction alters MGRN1 subcellular location and causes lysosomal enlargement. Interacts with KIAA1191.

The protein resides in the cell membrane. Its subcellular location is the golgi apparatus. Its function is as follows. Its primary physiological function is unclear. Has cytoprotective activity against internal or environmental stresses. May play a role in neuronal development and synaptic plasticity. May be required for neuronal myelin sheath maintenance. May play a role in iron uptake and iron homeostasis. Soluble oligomers are toxic to cultured neuroblastoma cells and induce apoptosis (in vitro). Association with GPC1 (via its heparan sulfate chains) targets PRNP to lipid rafts. Also provides Cu(2+) or Zn(2+) for the ascorbate-mediated GPC1 deaminase degradation of its heparan sulfate side chains. This is Major prion protein (PRNP) from Oryctolagus cuniculus (Rabbit).